Reading from the N-terminus, the 475-residue chain is ATP synthase subunit beta (475 aa).

An ATP-binding site is contributed by 148 to 155 (GGAGVGKT).

This sequence belongs to the ATPase alpha/beta chains family. In terms of assembly, F-type ATPases have 2 components, CF(1) - the catalytic core - and CF(0) - the membrane proton channel. CF(1) has five subunits: alpha(3), beta(3), gamma(1), delta(1), epsilon(1). CF(0) has three main subunits: a(1), b(2) and c(9-12). The alpha and beta chains form an alternating ring which encloses part of the gamma chain. CF(1) is attached to CF(0) by a central stalk formed by the gamma and epsilon chains, while a peripheral stalk is formed by the delta and b chains.

It localises to the cell inner membrane. The enzyme catalyses ATP + H2O + 4 H(+)(in) = ADP + phosphate + 5 H(+)(out). In terms of biological role, produces ATP from ADP in the presence of a proton gradient across the membrane. The catalytic sites are hosted primarily by the beta subunits. This chain is ATP synthase subunit beta, found in Psychrobacter sp. (strain PRwf-1).